A 208-amino-acid polypeptide reads, in one-letter code: High frequency lysogenization protein HflD homolog (208 aa).

This sequence belongs to the HflD family.

It is found in the cytoplasm. The protein resides in the cell inner membrane. This is High frequency lysogenization protein HflD homolog from Yersinia pestis bv. Antiqua (strain Nepal516).